The following is a 232-amino-acid chain: MAKDEAKGLLKSEELYKYILETSVYPREPEVLRELRNITHNHPQAGMATAPDAGQLMGMLLNLVNARKTIEVGVFTGYSLLLTALTLPEDGKVIAIDMNRDSYEIGLPVIKKAGVEHKIDFKESEALPALDELLNNKVNEGGFDFAFVDADKLNYWNYHERLIRLIKVGGIIVYDNTLWGGSVAEPDSSTPEWRIEVKKATLELNKKLSADQRVQISQAALGDGITICRRLY.

K7 contacts substrate. S-adenosyl-L-methionine contacts are provided by residues T49, E71, G73–V74, S79, D97, and A126. D149 provides a ligand contact to substrate. An a divalent metal cation-binding site is contributed by D149. D151 provides a ligand contact to S-adenosyl-L-methionine. A divalent metal cation is bound by residues D175 and N176.

This sequence belongs to the class I-like SAM-binding methyltransferase superfamily. Cation-dependent O-methyltransferase family. CCoAMT subfamily. Requires a divalent metal cation as cofactor.

The catalysed reaction is (E)-caffeoyl-CoA + S-adenosyl-L-methionine = (E)-feruloyl-CoA + S-adenosyl-L-homocysteine + H(+). It functions in the pathway aromatic compound metabolism; phenylpropanoid biosynthesis. In terms of biological role, methylates caffeoyl-CoA to feruloyl-CoA and 5-hydroxyferuloyl-CoA to sinapoyl-CoA. Plays a role in the synthesis of feruloylated polysaccharides. Involved in the reinforcement of the plant cell wall. Also involved in the responding to wounding or pathogen challenge by the increased formation of cell wall-bound ferulic acid polymers. The polypeptide is Probable caffeoyl-CoA O-methyltransferase At4g26220 (Arabidopsis thaliana (Mouse-ear cress)).